We begin with the raw amino-acid sequence, 209 residues long: ADP-ribose pyrophosphatase (209 aa).

Residues Phe28 to Phe29, Arg51 to Glu52, Arg56, and Arg79 each bind substrate. The region spanning Glu55–Ala193 is the Nudix hydrolase domain. Mg(2+) is bound at residue Ala96. Positions Gly97 to Gly118 match the Nudix box motif. Met98 provides a ligand contact to substrate. 2 residues coordinate Mg(2+): Glu112 and Glu116. Substrate contacts are provided by residues Ser133–Gly135 and Glu139. Glu162 acts as the Proton acceptor in catalysis. Glu164 contributes to the Mg(2+) binding site.

The protein belongs to the Nudix hydrolase family. NudF subfamily. In terms of assembly, homodimer. It depends on Mg(2+) as a cofactor.

It carries out the reaction ADP-D-ribose + H2O = D-ribose 5-phosphate + AMP + 2 H(+). Its activity is regulated as follows. Inhibited by phosphorylated compounds such as AMP, ADP, ATP, 3-phosphoglyceric acid and PPi. Not inhibited by orthophosphate. Activity is high in cells grown in low glucose concentrations and decreases dramatically as glucose concentration increases. Functionally, acts on ADP-mannose and ADP-glucose as well as ADP-ribose. Prevents glycogen biosynthesis. The reaction catalyzed by this enzyme is a limiting step of the gluconeogenic process. The sequence is that of ADP-ribose pyrophosphatase (nudF) from Escherichia coli O157:H7.